Consider the following 358-residue polypeptide: MAVKRLNDNLLTPVQKRNRKQIQVWLYSILLLCLAIVLVGGATRLTGSGLSITEWKPIHGVIPPIGVEQWQEEFLKYQQITQYKLLNRDMTLSAFKVIFWWEWAHRVLGRLVGLVALLGLIWFWATKRIEKNILFPLIVVPILIAFQGFIGWWMVASGIGQSNLTSVSQYRLAFHLITACLVIIFVTYLSRGLTEYSEKPANQKVQCFAAWLVILVLIEIYLGALVAGLHAGKVYNTWPLMDGQIIPDGLLQHHPYWLNLFENPLTVQFIHRFFAYFLFIVSALHAFYVQKNAPHSTHSRRAFLIFFIIIIQAILGILTLLHEVPISLGLIHQSMALVVLCFAVAHWRATKGAYRAVE.

Helical transmembrane passes span 22 to 42 (IQVW…VGGA), 107 to 127 (VLGR…WATK), 133 to 153 (ILFP…IGWW), 172 to 192 (LAFH…LSRG), 208 to 228 (FAAW…LVAG), 269 to 289 (FIHR…AFYV), 302 to 322 (AFLI…TLLH), and 324 to 344 (VPIS…CFAV). Residue His-271 participates in heme binding. Residue His-332 participates in heme binding.

This sequence belongs to the COX15/CtaA family. Type 2 subfamily. In terms of assembly, interacts with CtaB. Heme b serves as cofactor.

It is found in the cell membrane. It catalyses the reaction Fe(II)-heme o + 2 A + H2O = Fe(II)-heme a + 2 AH2. Its pathway is porphyrin-containing compound metabolism; heme A biosynthesis; heme A from heme O: step 1/1. Its function is as follows. Catalyzes the conversion of heme O to heme A by two successive hydroxylations of the methyl group at C8. The first hydroxylation forms heme I, the second hydroxylation results in an unstable dihydroxymethyl group, which spontaneously dehydrates, resulting in the formyl group of heme A. The chain is Heme A synthase from Bartonella tribocorum (strain CIP 105476 / IBS 506).